Here is a 508-residue protein sequence, read N- to C-terminus: RanBP-type and C3HC4-type zinc finger-containing protein 1 (508 aa).

At methionine 1 the chain carries N-acetylmethionine. Residues 1-218 (MDEKTKKAEE…PGCEMCCRAR (218 aa)) are interaction with IRF3. Residues 1–268 (MDEKTKKAEE…NYLQHVQLEQ (268 aa)) form an interaction with TAB2 region. Serine 50 bears the Phosphoserine mark. The Ubiquitin-like domain occupies 55–119 (IRLCVSVEDA…DQETLHSHGI (65 aa)). Residues 69–131 (VTIWLTVRPD…NGDGAYLYLL (63 aa)) form an interaction with RNF31 region. The disordered stretch occupies residues 163 to 191 (QSRGPLEPVLPKPRTNQEPGQPDAAPESP). The RanBP2-type zinc finger occupies 188–220 (PESPPVGWQCPGCTFINKPTRPGCEMCCRARPE). Residues 231–259 (DEEERARLAGEEEALRQYQQRKQQQQEGN) adopt a coiled-coil conformation. The tract at residues 276 to 504 (EPTECPVCYS…VNGIPCHPSC (229 aa)) is TRIAD supradomain. Residues cysteine 280, cysteine 283, cysteine 298, histidine 300, cysteine 303, cysteine 306, and cysteine 321 each coordinate Zn(2+). The segment at 280-330 (CPVCYSVLAPGEAVVLRECLHTFCRECLQGTIRNSQEAEVACPFIDSTYSC) adopts an RING-type 1 zinc-finger fold. Tyrosine 328 is subject to Phosphotyrosine. 11 residues coordinate Zn(2+): cysteine 330, cysteine 369, cysteine 374, cysteine 389, cysteine 392, cysteine 397, cysteine 400, histidine 404, cysteine 409, cysteine 445, and cysteine 448. The IBR-type zinc-finger motif lies at 349-409 (QRFLDLGVSI…CKAIHEHMNC (61 aa)). The RING-type 2; atypical zinc-finger motif lies at 445 to 474 (CPQCRIVVQKKDGCDWIRCTVCHTEICWVT). Cysteine 458 is a catalytic residue. The Zn(2+) site is built by cysteine 463 and cysteine 466.

This sequence belongs to the RBR family. Component of the LUBAC complex (linear ubiquitin chain assembly complex) which consists of SHARPIN, RBCK1 and RNF31. LUBAC has a MW of approximately 600 kDa suggesting a heteromultimeric assembly of its subunits. Interacts with beta-I-type (PRKCB1) and zeta-type protein kinase C (PRKCZ). Interacts with UBE2L3. Interacts with IREB2 only in iron-rich conditions. Associates with the TNF-R1 signaling complex (TNF-RSC) in a stimulation-dependent manner. Interacts with EYA1, TAB2, TAB3, MAP3K7 TRAF6 and RIPK1. Interacts with IRF3. Post-translationally, auto-ubiquitinated. Auto-ubiquitination leads to degradation by the proteasome. Phosphorylated. In vitro, phosphorylation inhibits auto-ubiquitination activity.

It catalyses the reaction [E2 ubiquitin-conjugating enzyme]-S-ubiquitinyl-L-cysteine + [acceptor protein]-L-lysine = [E2 ubiquitin-conjugating enzyme]-L-cysteine + [acceptor protein]-N(6)-ubiquitinyl-L-lysine.. It participates in protein modification; protein ubiquitination. Functionally, E3 ubiquitin-protein ligase, which accepts ubiquitin from specific E2 ubiquitin-conjugating enzymes, such as UBE2L3/UBCM4, and then transfers it to substrates. Functions as an E3 ligase for oxidized IREB2 and both heme and oxygen are necessary for IREB2 ubiquitination. Promotes ubiquitination of TAB2 and IRF3 and their degradation by the proteasome. Component of the LUBAC complex which conjugates linear ('Met-1'-linked) polyubiquitin chains to substrates and plays a key role in NF-kappa-B activation and regulation of inflammation. LUBAC conjugates linear polyubiquitin to IKBKG and RIPK1 and is involved in activation of the canonical NF-kappa-B and the JNK signaling pathways. Linear ubiquitination mediated by the LUBAC complex interferes with TNF-induced cell death and thereby prevents inflammation. LUBAC is recruited to the TNF-R1 signaling complex (TNF-RSC) following polyubiquitination of TNF-RSC components by BIRC2 and/or BIRC3 and to conjugate linear polyubiquitin to IKBKG and possibly other components contributing to the stability of the complex. The LUBAC complex is also involved in innate immunity by conjugating linear polyubiquitin chains at the surface of bacteria invading the cytosol to form the ubiquitin coat surrounding bacteria. LUBAC is not able to initiate formation of the bacterial ubiquitin coat, and can only promote formation of linear polyubiquitins on pre-existing ubiquitin. The bacterial ubiquitin coat acts as an 'eat-me' signal for xenophagy and promotes NF-kappa-B activation. Together with OTULIN, the LUBAC complex regulates the canonical Wnt signaling during angiogenesis. Binds polyubiquitin of different linkage types. In Mus musculus (Mouse), this protein is RanBP-type and C3HC4-type zinc finger-containing protein 1 (Rbck1).